The sequence spans 269 residues: Formamidopyrimidine-DNA glycosylase (269 aa).

Catalysis depends on Pro-2, which acts as the Schiff-base intermediate with DNA. Catalysis depends on Glu-3, which acts as the Proton donor. Lys-57 serves as the catalytic Proton donor; for beta-elimination activity. Positions 90, 109, and 150 each coordinate DNA. An FPG-type zinc finger spans residues 235–269; sequence QVYGKGGKPCPRCDNPLSEMKIGQRASVFCSECQK. The active-site Proton donor; for delta-elimination activity is the Arg-259.

This sequence belongs to the FPG family. In terms of assembly, monomer. It depends on Zn(2+) as a cofactor.

The enzyme catalyses Hydrolysis of DNA containing ring-opened 7-methylguanine residues, releasing 2,6-diamino-4-hydroxy-5-(N-methyl)formamidopyrimidine.. The catalysed reaction is 2'-deoxyribonucleotide-(2'-deoxyribose 5'-phosphate)-2'-deoxyribonucleotide-DNA = a 3'-end 2'-deoxyribonucleotide-(2,3-dehydro-2,3-deoxyribose 5'-phosphate)-DNA + a 5'-end 5'-phospho-2'-deoxyribonucleoside-DNA + H(+). Involved in base excision repair of DNA damaged by oxidation or by mutagenic agents. Acts as a DNA glycosylase that recognizes and removes damaged bases. Has a preference for oxidized purines, such as 7,8-dihydro-8-oxoguanine (8-oxoG). Has AP (apurinic/apyrimidinic) lyase activity and introduces nicks in the DNA strand. Cleaves the DNA backbone by beta-delta elimination to generate a single-strand break at the site of the removed base with both 3'- and 5'-phosphates. This chain is Formamidopyrimidine-DNA glycosylase, found in Photobacterium profundum (strain SS9).